Here is a 448-residue protein sequence, read N- to C-terminus: Ribosomal protein uS12 methylthiotransferase RimO (448 aa).

One can recognise an MTTase N-terminal domain in the interval 13–128 (KSFFITTLGC…AGEILRKNFP (116 aa)). Positions 22, 58, 91, 167, 171, and 174 each coordinate [4Fe-4S] cluster. A Radical SAM core domain is found at 153–382 (NYSKPYSYVK…AYLGTLKTIH (230 aa)). Residues 383-448 (QNRIGKIYPC…ELDMSGTWVD (66 aa)) enclose the TRAM domain.

Belongs to the methylthiotransferase family. RimO subfamily. Requires [4Fe-4S] cluster as cofactor.

The protein resides in the cytoplasm. It catalyses the reaction L-aspartate(89)-[ribosomal protein uS12]-hydrogen + (sulfur carrier)-SH + AH2 + 2 S-adenosyl-L-methionine = 3-methylsulfanyl-L-aspartate(89)-[ribosomal protein uS12]-hydrogen + (sulfur carrier)-H + 5'-deoxyadenosine + L-methionine + A + S-adenosyl-L-homocysteine + 2 H(+). Catalyzes the methylthiolation of an aspartic acid residue of ribosomal protein uS12. In Leptospira biflexa serovar Patoc (strain Patoc 1 / Ames), this protein is Ribosomal protein uS12 methylthiotransferase RimO.